The primary structure comprises 252 residues: Probable transcriptional regulatory protein Ava_1228 (252 aa).

Belongs to the TACO1 family.

Its subcellular location is the cytoplasm. The sequence is that of Probable transcriptional regulatory protein Ava_1228 from Trichormus variabilis (strain ATCC 29413 / PCC 7937) (Anabaena variabilis).